Consider the following 156-residue polypeptide: Small ribosomal subunit protein uS7 (156 aa).

This sequence belongs to the universal ribosomal protein uS7 family. As to quaternary structure, part of the 30S ribosomal subunit. Contacts proteins S9 and S11.

Functionally, one of the primary rRNA binding proteins, it binds directly to 16S rRNA where it nucleates assembly of the head domain of the 30S subunit. Is located at the subunit interface close to the decoding center, probably blocks exit of the E-site tRNA. In Shouchella clausii (strain KSM-K16) (Alkalihalobacillus clausii), this protein is Small ribosomal subunit protein uS7.